Reading from the N-terminus, the 439-residue chain is Hydrogenobyrinate a,c-diamide synthase (439 aa).

Residues 247–439 form the GATase cobBQ-type domain; it reads RIALAEDGAF…FFHAIARASA (193 aa). C329 serves as the catalytic Nucleophile.

This sequence belongs to the CobB/CbiA family. Mg(2+) serves as cofactor.

The catalysed reaction is hydrogenobyrinate + 2 L-glutamine + 2 ATP + 2 H2O = hydrogenobyrinate a,c-diamide + 2 L-glutamate + 2 ADP + 2 phosphate + 2 H(+). The protein operates within cofactor biosynthesis; adenosylcobalamin biosynthesis; cob(II)yrinate a,c-diamide from precorrin-2 (aerobic route): step 9/10. Functionally, catalyzes the ATP-dependent amidation of the two carboxylate groups at positions a and c of hydrogenobyrinate, using either L-glutamine or ammonia as the nitrogen source. The chain is Hydrogenobyrinate a,c-diamide synthase from Mesorhizobium japonicum (strain LMG 29417 / CECT 9101 / MAFF 303099) (Mesorhizobium loti (strain MAFF 303099)).